An 864-amino-acid chain; its full sequence is N-alpha-acetyltransferase 16, NatA auxiliary subunit (864 aa).

7 TPR repeats span residues 46-79 (GETL…DVRS), 80-113 (HVCW…DKDN), 148-184 (RASW…PPNK), 224-257 (LLVE…NAEN), 374-407 (IWVQ…TPTL), 408-441 (IELF…DTAD), and 485-514 (MWFE…VERH). Residues 594-646 (KMLSKQRRAQKKAKVEEERKHTERERQQKNQKKKREEEEEVTSGHKEELIPEK) are disordered. Basic residues predominate over residues 595–605 (MLSKQRRAQKK). Composition is skewed to basic and acidic residues over residues 606–621 (AKVE…ERQQ) and 635–646 (TSGHKEELIPEK).

As to quaternary structure, component of the N-terminal acetyltransferase A (NatA) complex composed of NAA10 and NAA16. Highest levels in the kidney and testes. Moderate expression in the liver, thymus and skin.

Functionally, auxillary subunit of the N-terminal acetyltransferase A (NatA) complex which displays alpha (N-terminal) acetyltransferase activity. The protein is N-alpha-acetyltransferase 16, NatA auxiliary subunit (Naa16) of Mus musculus (Mouse).